We begin with the raw amino-acid sequence, 231 residues long: Homeobox protein engrailed-1a (231 aa).

Disordered regions lie at residues 1 to 29 (MEDQ…AHRN), 43 to 105 (GCKR…KDSQ), and 121 to 148 (DRPS…RPRT). Positions 43 to 56 (GCKRERERVTRDSG) are enriched in basic and acidic residues. Residues 68 to 102 (DGVSSSASSTVSSPVSSRQSNKVEQGSSKSSSPSK) are compositionally biased toward low complexity. A DNA-binding region (homeobox) is located at residues 143 to 202 (DKRPRTAFTAEQLQRLKAEFQTSRYITEQRRQALARELGLNESQIKIWFQNKRAKIKKSS).

Belongs to the engrailed homeobox family.

The protein resides in the nucleus. This Danio rerio (Zebrafish) protein is Homeobox protein engrailed-1a (eng1a).